Reading from the N-terminus, the 245-residue chain is Aliphatic sulfonates import ATP-binding protein SsuB 2 (245 aa).

The ABC transporter domain occupies 15-229; it reads VAVRGLSRAF…DVADPEFARI (215 aa). 47–54 is an ATP binding site; that stretch reads GASGCGKS.

Belongs to the ABC transporter superfamily. Aliphatic sulfonates importer (TC 3.A.1.17.2) family. The complex is composed of two ATP-binding proteins (SsuB), two transmembrane proteins (SsuC) and a solute-binding protein (SsuA).

The protein resides in the cell inner membrane. It catalyses the reaction ATP + H2O + aliphatic sulfonate-[sulfonate-binding protein]Side 1 = ADP + phosphate + aliphatic sulfonateSide 2 + [sulfonate-binding protein]Side 1.. Part of the ABC transporter complex SsuABC involved in aliphatic sulfonates import. Responsible for energy coupling to the transport system. The polypeptide is Aliphatic sulfonates import ATP-binding protein SsuB 2 (Paracoccus denitrificans (strain Pd 1222)).